The following is a 603-amino-acid chain: uncharacterized protein (603 aa).

Residues 1–93 form the PE domain; sequence MSFVIAAPET…AGAYASAEAA (93 aa).

Belongs to the mycobacterial PE family. PGRS subfamily.

This is an uncharacterized protein from Mycobacterium tuberculosis (strain ATCC 25618 / H37Rv).